The primary structure comprises 920 residues: Sensor histidine kinase SsrA (920 aa).

Topologically, residues 1–19 are cytoplasmic; it reads MNLLNLKNTLQTSLVIRLT. Residues 20–40 traverse the membrane as a helical segment; that stretch reads FLFLLTTIIIWLLSVLTAAYI. The Periplasmic segment spans residues 41–291; it reads SMVQKRQHII…YGNLHNRILK (251 aa). A helical transmembrane segment spans residues 292–312; the sequence is IILQQIPFTLTALVLMTSAFC. The Cytoplasmic portion of the chain corresponds to 313 to 920; it reads WLLHRSLAKP…RMIFKNYTIT (608 aa). The HAMP domain occupies 317–369; that stretch reads RSLAKPLWRFVDVINKTATAPLSTRLPAQRLDELDSIAGAFNQLLDTLQVQYD. Residues 354–395 adopt a coiled-coil conformation; it reads AGAFNQLLDTLQVQYDNLENKVAERTQALNEAKKRAERANKR. One can recognise a Histidine kinase domain in the interval 402–614; that stretch reads VISHELRTPM…CVSLVLPLQE (213 aa). ATP contacts are provided by H405 and D549. Position 405 is a phosphohistidine; by autocatalysis (H405). The Response regulatory domain maps to 690–808; that stretch reads QILLVDDADI…TLARYISIAA (119 aa). The residue at position 739 (D739) is a 4-aspartylphosphate.

In terms of processing, autophosphorylated.

The protein resides in the cell inner membrane. It carries out the reaction ATP + protein L-histidine = ADP + protein N-phospho-L-histidine.. Functionally, member of the two-component regulatory system SsrA/SsrB (SpiR/SsrB) that is required for intracellular proliferation and systemic dissemination within the host. When inside acidic Salmonella-containing vesicles (SCV) within host cells the SsrA sensor kinase autophosphorylates and the phosphoryl group is transferred to the response regulator SsrB; phosphorylated SsrB activates the expression of genes encoding virulence proteins, including pathogenicity island 2 (SPI2) and other horizontally acquired genes, and antagonizes the action of transcriptional repressor hns (H-NS). The polypeptide is Sensor histidine kinase SsrA (Salmonella typhimurium (strain LT2 / SGSC1412 / ATCC 700720)).